The primary structure comprises 218 residues: Eukaryotic translation initiation factor 3 subunit K (218 aa).

At A2 the chain carries N-acetylalanine. T28 carries the phosphothreonine modification. A PCI domain is found at 42-204 (YDLEANLAVL…SIKPKNIVEK (163 aa)). S217 carries the post-translational modification Phosphoserine.

The protein belongs to the eIF-3 subunit K family. Component of the eukaryotic translation initiation factor 3 (eIF-3) complex, which is composed of 13 subunits: EIF3A, EIF3B, EIF3C, EIF3D, EIF3E, EIF3F, EIF3G, EIF3H, EIF3I, EIF3J, EIF3K, EIF3L and EIF3M. The eIF-3 complex appears to include 3 stable modules: module A is composed of EIF3A, EIF3B, EIF3G and EIF3I; module B is composed of EIF3F, EIF3H, and EIF3M; and module C is composed of EIF3C, EIF3D, EIF3E, EIF3K and EIF3L. EIF3C of module C binds EIF3B of module A and EIF3H of module B, thereby linking the three modules. EIF3J is a labile subunit that binds to the eIF-3 complex via EIF3B. The eIF-3 complex interacts with RPS6KB1 under conditions of nutrient depletion. Mitogenic stimulation leads to binding and activation of a complex composed of MTOR and RPTOR, leading to phosphorylation and release of RPS6KB1 and binding of EIF4B to eIF-3. Interacts with CCND3, but not with CCND1 and CCND2.

It localises to the nucleus. It is found in the cytoplasm. Its function is as follows. Component of the eukaryotic translation initiation factor 3 (eIF-3) complex, which is required for several steps in the initiation of protein synthesis. The eIF-3 complex associates with the 40S ribosome and facilitates the recruitment of eIF-1, eIF-1A, eIF-2:GTP:methionyl-tRNAi and eIF-5 to form the 43S pre-initiation complex (43S PIC). The eIF-3 complex stimulates mRNA recruitment to the 43S PIC and scanning of the mRNA for AUG recognition. The eIF-3 complex is also required for disassembly and recycling of post-termination ribosomal complexes and subsequently prevents premature joining of the 40S and 60S ribosomal subunits prior to initiation. The eIF-3 complex specifically targets and initiates translation of a subset of mRNAs involved in cell proliferation, including cell cycling, differentiation and apoptosis, and uses different modes of RNA stem-loop binding to exert either translational activation or repression. This chain is Eukaryotic translation initiation factor 3 subunit K, found in Bos taurus (Bovine).